The following is a 176-amino-acid chain: NADH-quinone oxidoreductase subunit I (176 aa).

4Fe-4S ferredoxin-type domains follow at residues leucine 47–alanine 77 and alanine 87–glutamate 116. Residues cysteine 57, cysteine 60, cysteine 63, cysteine 67, cysteine 96, cysteine 99, cysteine 102, and cysteine 106 each contribute to the [4Fe-4S] cluster site.

It belongs to the complex I 23 kDa subunit family. As to quaternary structure, NDH-1 is composed of 14 different subunits. Subunits NuoA, H, J, K, L, M, N constitute the membrane sector of the complex. The cofactor is [4Fe-4S] cluster.

The protein resides in the cell inner membrane. The enzyme catalyses a quinone + NADH + 5 H(+)(in) = a quinol + NAD(+) + 4 H(+)(out). Functionally, NDH-1 shuttles electrons from NADH, via FMN and iron-sulfur (Fe-S) centers, to quinones in the respiratory chain. The immediate electron acceptor for the enzyme in this species is believed to be ubiquinone. Couples the redox reaction to proton translocation (for every two electrons transferred, four hydrogen ions are translocated across the cytoplasmic membrane), and thus conserves the redox energy in a proton gradient. This is NADH-quinone oxidoreductase subunit I from Syntrophotalea carbinolica (strain DSM 2380 / NBRC 103641 / GraBd1) (Pelobacter carbinolicus).